The chain runs to 551 residues: BAG family molecular chaperone regulator 8, chloroplastic (551 aa).

The segment covering 1 to 19 (MASHHHHNHNHVCSRHQNH) has biased composition (basic residues). The disordered stretch occupies residues 1–46 (MASHHHHNHNHVCSRHQNHHNNTPQFATSPNCCNKSNHPSPPPAED). A chloroplast-targeting transit peptide spans 1–52 (MASHHHHNHNHVCSRHQNHHNNTPQFATSPNCCNKSNHPSPPPAEDNLLHLV). Residues 20–38 (HNNTPQFATSPNCCNKSNH) show a composition bias toward polar residues. Residues 131 to 160 (RDSAARVIQTHFRSYLVHRSISFRQLKELA) enclose the IQ domain. The 82-residue stretch at 147–228 (VHRSISFRQL…RFVQYVDDCV (82 aa)) folds into the BAG domain. Positions 246 to 281 (GKKPQGFGTSSEDEDNNADMSDDSEEVPVSSIDKRK) are disordered. The span at 256-271 (SEDEDNNADMSDDSEE) shows a compositional bias: acidic residues. Position 332 is a phosphoserine (S332). Disordered stretches follow at residues 414–433 (DEGK…KGSG) and 450–551 (NVYK…KMEP). A compositionally biased stretch (basic and acidic residues) spans 479 to 499 (GEEKGNVNEVEEIKYVPKENE). The span at 500–513 (SFEEEEEKETDSEN) shows a compositional bias: acidic residues. Basic and acidic residues predominate over residues 522–534 (EGDKRVTKKEVQH).

Binds to the ATPase domain of HSP70/HSC70 chaperones.

It is found in the plastid. It localises to the chloroplast. In terms of biological role, co-chaperone that regulates diverse cellular pathways, such as programmed cell death and stress responses. This is BAG family molecular chaperone regulator 8, chloroplastic (BAG1) from Arabidopsis thaliana (Mouse-ear cress).